The chain runs to 38 residues: Photosystem II reaction center protein L (38 aa).

Residues 17-37 (SLYWGLLLIFVLAVLFSSYIF) traverse the membrane as a helical segment.

It belongs to the PsbL family. In terms of assembly, PSII is composed of 1 copy each of membrane proteins PsbA, PsbB, PsbC, PsbD, PsbE, PsbF, PsbH, PsbI, PsbJ, PsbK, PsbL, PsbM, PsbT, PsbX, PsbY, PsbZ, Psb30/Ycf12, at least 3 peripheral proteins of the oxygen-evolving complex and a large number of cofactors. It forms dimeric complexes.

The protein resides in the plastid. The protein localises to the chloroplast thylakoid membrane. In terms of biological role, one of the components of the core complex of photosystem II (PSII). PSII is a light-driven water:plastoquinone oxidoreductase that uses light energy to abstract electrons from H(2)O, generating O(2) and a proton gradient subsequently used for ATP formation. It consists of a core antenna complex that captures photons, and an electron transfer chain that converts photonic excitation into a charge separation. This subunit is found at the monomer-monomer interface and is required for correct PSII assembly and/or dimerization. The sequence is that of Photosystem II reaction center protein L from Tupiella akineta (Green alga).